The sequence spans 1036 residues: Presequence protease, mitochondrial (1036 aa).

Residues 1–15 (MWRFSGRRGLCAVQR) constitute a mitochondrion transit peptide. His-104 serves as a coordination point for Zn(2+). Glu-107 serves as the catalytic Proton acceptor. Residues His-108 and Glu-205 each coordinate Zn(2+). A disulfide bond links Cys-119 and Cys-556. Lys-759 bears the N6-acetyllysine mark. At Lys-770 the chain carries N6-acetyllysine; alternate. N6-succinyllysine; alternate is present on Lys-770. The tract at residues 806 to 833 (SKKERKPVRPHIVEKPTPSGPSGAAHVS) is disordered. Residue Lys-848 is modified to N6-succinyllysine. The residue at position 883 (Lys-883) is an N6-acetyllysine. Lys-945 carries the N6-succinyllysine modification.

The protein belongs to the peptidase M16 family. PreP subfamily. As to quaternary structure, monomer and homodimer; homodimerization is induced by binding of the substrate. Zn(2+) is required as a cofactor. Post-translationally, a disulfide bond locks the enzyme in the closed conformation preventing substrate entry into the catalytic chamber.

The protein localises to the mitochondrion matrix. Its activity is regulated as follows. Mainly exists in a closed and catalytically competent conformation but a closed-to-open switch allows substrate entry into the catalytic chamber. Substrate binding induces closure and dimerization. A disulfide bond may lock the enzyme in a closed conformation preventing substrate entry into the catalytic chamber, participating in redox regulation of the enzyme. Inhibited by metal-chelating agents. Inhibited by nickel and zinc excess, and slightly activated by manganese. In terms of biological role, metalloendopeptidase of the mitochondrial matrix that functions in peptide cleavage and degradation rather than in protein processing. Has an ATP-independent activity. Specifically cleaves peptides in the range of 5 to 65 residues. Shows a preference for cleavage after small polar residues and before basic residues, but without any positional preference. Degrades the transit peptides of mitochondrial proteins after their cleavage. Also degrades other unstructured peptides. It is also able to degrade amyloid-beta protein 40, one of the peptides produced by APP processing, when it accumulates in mitochondrion. It is a highly efficient protease, at least toward amyloid-beta protein 40. Cleaves that peptide at a specific position and is probably not processive, releasing digested peptides intermediates that can be further cleaved subsequently. It is also able to degrade amyloid-beta protein 42. In Mus musculus (Mouse), this protein is Presequence protease, mitochondrial.